A 222-amino-acid chain; its full sequence is Transmembrane reductase CYB561D2 (222 aa).

Residues 2-17 lie on the Cytoplasmic side of the membrane; that stretch reads ALSVETESHIYRALRT. The Cytochrome b561 domain occupies 14 to 217; it reads ALRTVSGAAA…NQVSNAYLYR (204 aa). The chain crosses the membrane as a helical span at residues 18–38; the sequence is VSGAAAHLVALGFTIFVAVLA. At 39 to 46 the chain is on the lumenal side; it reads RPGSSLFS. Residues 47–67 traverse the membrane as a helical segment; sequence WHPVLMSLAFSFLMTEALLVF. A heme b-binding site is contributed by His48. Residues 68-85 lie on the Cytoplasmic side of the membrane; that stretch reads SPESSLLRSLSRKGRARC. 2 residues coordinate heme b: His86 and His120. Residues 86–106 traverse the membrane as a helical segment; it reads HWVLQLLALLCALLGLGLVIL. The Lumenal portion of the chain corresponds to 107–122; sequence HKEQLGKAHLATWHGR. The helical transmembrane segment at 123-143 threads the bilayer; sequence AGLLAVLWAGLQCSGGVGLLY. Residues 144 to 162 lie on the Cytoplasmic side of the membrane; the sequence is PKLLPRWPLAKLKLYHATS. His159 is a heme b binding site. A helical transmembrane segment spans residues 163–183; sequence GLVGYLLGGASLLLGMCSLWF. Over 184–186 the chain is Lumenal; the sequence is TAT. The helical transmembrane segment at 187 to 207 threads the bilayer; sequence VTGGVWYLAVLCPVITSLVIM. Over 208-222 the chain is Cytoplasmic; that stretch reads NQVSNAYLYRKRIQP.

Heme b is required as a cofactor.

Its subcellular location is the endoplasmic reticulum membrane. It is found in the cytoplasmic vesicle membrane. The catalysed reaction is monodehydro-L-ascorbate radical(out) + L-ascorbate(in) = monodehydro-L-ascorbate radical(in) + L-ascorbate(out). It carries out the reaction Fe(3+)(out) + L-ascorbate(in) = monodehydro-L-ascorbate radical(in) + Fe(2+)(out) + H(+). Its function is as follows. Transmembrane reductase that may use ascorbate as an electron donor in the cytoplasm and transfer electrons across endoplasmic reticulum membranes to reduce monodehydro-L-ascorbate radical and iron cations Fe(3+) in the lumen of that compartment. The polypeptide is Transmembrane reductase CYB561D2 (Bos taurus (Bovine)).